The primary structure comprises 145 residues: Large ribosomal subunit protein uL16 (145 aa).

It belongs to the universal ribosomal protein uL16 family. As to quaternary structure, part of the 50S ribosomal subunit.

In terms of biological role, binds 23S rRNA and is also seen to make contacts with the A and possibly P site tRNAs. In Agathobacter rectalis (strain ATCC 33656 / DSM 3377 / JCM 17463 / KCTC 5835 / VPI 0990) (Eubacterium rectale), this protein is Large ribosomal subunit protein uL16.